The chain runs to 306 residues: D-alanine--D-alanine ligase (306 aa).

The 196-residue stretch at 106-301 (KLLWQSAGIN…FEELVLKILG (196 aa)) folds into the ATP-grasp domain. 132-187 (AKELGLPLIVKPSREGSTIGLSKVREAGEVAAAWHLAARHDAMVLAEQFIEGTELT) lines the ATP pocket. Aspartate 255, glutamate 268, and asparagine 270 together coordinate Mg(2+).

Belongs to the D-alanine--D-alanine ligase family. Mg(2+) is required as a cofactor. It depends on Mn(2+) as a cofactor.

Its subcellular location is the cytoplasm. The catalysed reaction is 2 D-alanine + ATP = D-alanyl-D-alanine + ADP + phosphate + H(+). It participates in cell wall biogenesis; peptidoglycan biosynthesis. Functionally, cell wall formation. The polypeptide is D-alanine--D-alanine ligase (Nitrosospira multiformis (strain ATCC 25196 / NCIMB 11849 / C 71)).